Here is a 379-residue protein sequence, read N- to C-terminus: UDP-4-amino-4-deoxy-L-arabinose--oxoglutarate aminotransferase (379 aa).

Residue lysine 182 is modified to N6-(pyridoxal phosphate)lysine.

This sequence belongs to the DegT/DnrJ/EryC1 family. ArnB subfamily. As to quaternary structure, homodimer. The cofactor is pyridoxal 5'-phosphate.

The catalysed reaction is UDP-4-amino-4-deoxy-beta-L-arabinose + 2-oxoglutarate = UDP-beta-L-threo-pentopyranos-4-ulose + L-glutamate. Its pathway is nucleotide-sugar biosynthesis; UDP-4-deoxy-4-formamido-beta-L-arabinose biosynthesis; UDP-4-deoxy-4-formamido-beta-L-arabinose from UDP-alpha-D-glucuronate: step 2/3. It functions in the pathway bacterial outer membrane biogenesis; lipopolysaccharide biosynthesis. Catalyzes the conversion of UDP-4-keto-arabinose (UDP-Ara4O) to UDP-4-amino-4-deoxy-L-arabinose (UDP-L-Ara4N). The modified arabinose is attached to lipid A and is required for resistance to polymyxin and cationic antimicrobial peptides. This is UDP-4-amino-4-deoxy-L-arabinose--oxoglutarate aminotransferase from Escherichia fergusonii (strain ATCC 35469 / DSM 13698 / CCUG 18766 / IAM 14443 / JCM 21226 / LMG 7866 / NBRC 102419 / NCTC 12128 / CDC 0568-73).